The following is a 356-amino-acid chain: UDP-N-acetylglucosamine--N-acetylmuramyl-(pentapeptide) pyrophosphoryl-undecaprenol N-acetylglucosamine transferase (356 aa).

Residues 11 to 13 (TAG), N123, R159, and S192 each bind UDP-N-acetyl-alpha-D-glucosamine.

Belongs to the glycosyltransferase 28 family. MurG subfamily.

It localises to the cell membrane. It carries out the reaction di-trans,octa-cis-undecaprenyl diphospho-N-acetyl-alpha-D-muramoyl-L-alanyl-D-glutamyl-meso-2,6-diaminopimeloyl-D-alanyl-D-alanine + UDP-N-acetyl-alpha-D-glucosamine = di-trans,octa-cis-undecaprenyl diphospho-[N-acetyl-alpha-D-glucosaminyl-(1-&gt;4)]-N-acetyl-alpha-D-muramoyl-L-alanyl-D-glutamyl-meso-2,6-diaminopimeloyl-D-alanyl-D-alanine + UDP + H(+). The protein operates within cell wall biogenesis; peptidoglycan biosynthesis. Functionally, cell wall formation. Catalyzes the transfer of a GlcNAc subunit on undecaprenyl-pyrophosphoryl-MurNAc-pentapeptide (lipid intermediate I) to form undecaprenyl-pyrophosphoryl-MurNAc-(pentapeptide)GlcNAc (lipid intermediate II). The sequence is that of UDP-N-acetylglucosamine--N-acetylmuramyl-(pentapeptide) pyrophosphoryl-undecaprenol N-acetylglucosamine transferase from Tropheryma whipplei (strain Twist) (Whipple's bacillus).